The primary structure comprises 248 residues: Octanoyltransferase (248 aa).

The BPL/LPL catalytic domain occupies 53–234 (ADTVDEIWIV…RLIANLDGES (182 aa)). Substrate is bound by residues 93–100 (RGGQITYH), 165–167 (ALG), and 178–180 (GLS). Cysteine 196 serves as the catalytic Acyl-thioester intermediate.

The protein belongs to the LipB family.

The protein localises to the cytoplasm. It carries out the reaction octanoyl-[ACP] + L-lysyl-[protein] = N(6)-octanoyl-L-lysyl-[protein] + holo-[ACP] + H(+). The protein operates within protein modification; protein lipoylation via endogenous pathway; protein N(6)-(lipoyl)lysine from octanoyl-[acyl-carrier-protein]: step 1/2. Functionally, catalyzes the transfer of endogenously produced octanoic acid from octanoyl-acyl-carrier-protein onto the lipoyl domains of lipoate-dependent enzymes. Lipoyl-ACP can also act as a substrate although octanoyl-ACP is likely to be the physiological substrate. The chain is Octanoyltransferase from Burkholderia multivorans (strain ATCC 17616 / 249).